The sequence spans 260 residues: Hydroxyethylthiazole kinase 1 (260 aa).

Met-39 is a binding site for substrate. ATP-binding residues include Arg-115 and Thr-160. Position 187 (Gly-187) interacts with substrate.

Belongs to the Thz kinase family. It depends on Mg(2+) as a cofactor.

It carries out the reaction 5-(2-hydroxyethyl)-4-methylthiazole + ATP = 4-methyl-5-(2-phosphooxyethyl)-thiazole + ADP + H(+). Its pathway is cofactor biosynthesis; thiamine diphosphate biosynthesis; 4-methyl-5-(2-phosphoethyl)-thiazole from 5-(2-hydroxyethyl)-4-methylthiazole: step 1/1. Catalyzes the phosphorylation of the hydroxyl group of 4-methyl-5-beta-hydroxyethylthiazole (THZ). In Streptococcus pneumoniae (strain ATCC 700669 / Spain 23F-1), this protein is Hydroxyethylthiazole kinase 1.